The chain runs to 334 residues: Ketol-acid reductoisomerase (NADP(+)) (334 aa).

The 180-residue stretch at 2-181 folds into the KARI N-terminal Rossmann domain; that stretch reads TKVYYDQSVE…GATRAGVIET (180 aa). NADP(+)-binding positions include 25–28, Arg-48, Ser-52, and 82–85; these read YGSQ and DEIQ. His-107 is an active-site residue. Gly-133 is an NADP(+) binding site. The 146-residue stretch at 182–327 folds into the KARI C-terminal knotted domain; sequence TFKEETETDL…RELRKMMPFI (146 aa). Mg(2+) contacts are provided by Asp-190, Glu-194, Glu-226, and Glu-230. Ser-251 serves as a coordination point for substrate.

The protein belongs to the ketol-acid reductoisomerase family. It depends on Mg(2+) as a cofactor.

The enzyme catalyses (2R)-2,3-dihydroxy-3-methylbutanoate + NADP(+) = (2S)-2-acetolactate + NADPH + H(+). The catalysed reaction is (2R,3R)-2,3-dihydroxy-3-methylpentanoate + NADP(+) = (S)-2-ethyl-2-hydroxy-3-oxobutanoate + NADPH + H(+). It participates in amino-acid biosynthesis; L-isoleucine biosynthesis; L-isoleucine from 2-oxobutanoate: step 2/4. The protein operates within amino-acid biosynthesis; L-valine biosynthesis; L-valine from pyruvate: step 2/4. Involved in the biosynthesis of branched-chain amino acids (BCAA). Catalyzes an alkyl-migration followed by a ketol-acid reduction of (S)-2-acetolactate (S2AL) to yield (R)-2,3-dihydroxy-isovalerate. In the isomerase reaction, S2AL is rearranged via a Mg-dependent methyl migration to produce 3-hydroxy-3-methyl-2-ketobutyrate (HMKB). In the reductase reaction, this 2-ketoacid undergoes a metal-dependent reduction by NADPH to yield (R)-2,3-dihydroxy-isovalerate. The chain is Ketol-acid reductoisomerase (NADP(+)) from Staphylococcus haemolyticus (strain JCSC1435).